Here is a 382-residue protein sequence, read N- to C-terminus: Serine protease 43 (382 aa).

Positions 1–27 (MGGFCGADRGGFLALLVWLQLLQPLFS) are cleaved as a signal peptide. Residues 30–97 (YKPREDSGVM…SGTTTKITLE (68 aa)) are disordered. Polar residues-rich tracts occupy residues 56–68 (AQQS…SISH) and 85–95 (GSPSGTTTKIT). A Peptidase S1 domain is found at 119–355 (VDPGSLSAGR…YNEWVSYVLS (237 aa)). Cys144 and Cys160 are joined by a disulfide. Active-site charge relay system residues include His159 and Asp205. Disulfide bonds link Cys239–Cys313, Cys272–Cys293, and Cys303–Cys331. The active-site Charge relay system is Ser307. The helical transmembrane segment at 362 to 382 (PMGVLVLYLSLVFPLALLVAL) threads the bilayer.

This sequence belongs to the peptidase S1 family. Testis-specific. Expressed in germ cells at the stages from late pachytene spermatocytes to spermatids.

The protein resides in the cell membrane. Functionally, plays a role in spermatogenesis. Involved in germ cell survival during meiosis. Lacks protease activity in vitro. The polypeptide is Serine protease 43 (Mus musculus (Mouse)).